Here is a 919-residue protein sequence, read N- to C-terminus: Probable glucan 1,3-alpha-glucosidase (919 aa).

The N-terminal stretch at 1-28 is a signal peptide; the sequence is MDPPPRPRPHRVAVLLLLLLASSPAARA. The active-site Nucleophile is D510. Residue E513 is part of the active site. D586 functions as the Proton donor in the catalytic mechanism. N802 carries an N-linked (GlcNAc...) asparagine glycan.

It belongs to the glycosyl hydrolase 31 family. As to quaternary structure, heterodimer of a catalytic alpha subunit and a beta subunit.

Its subcellular location is the endoplasmic reticulum. It catalyses the reaction N(4)-(alpha-D-Glc-(1-&gt;3)-alpha-D-Man-(1-&gt;2)-alpha-D-Man-(1-&gt;2)-alpha-D-Man-(1-&gt;3)-[alpha-D-Man-(1-&gt;2)-alpha-D-Man-(1-&gt;3)-[alpha-D-Man-(1-&gt;2)-alpha-D-Man-(1-&gt;6)]-alpha-D-Man-(1-&gt;6)]-beta-D-Man-(1-&gt;4)-beta-D-GlcNAc-(1-&gt;4)-beta-D-GlcNAc)-L-asparaginyl-[protein] + H2O = N(4)-(alpha-D-Man-(1-&gt;2)-alpha-D-Man-(1-&gt;2)-alpha-D-Man-(1-&gt;3)-[alpha-D-Man-(1-&gt;2)-alpha-D-Man-(1-&gt;3)-[alpha-D-Man-(1-&gt;2)-alpha-D-Man-(1-&gt;6)]-alpha-D-Man-(1-&gt;6)]-beta-D-Man-(1-&gt;4)-beta-D-GlcNAc-(1-&gt;4)-beta-D-GlcNAc)-L-asparaginyl-[protein] (N-glucan mannose isomer 9A1,2,3B1,2,3) + beta-D-glucose. The enzyme catalyses N(4)-(alpha-D-Glc-(1-&gt;3)-alpha-D-Glc-(1-&gt;3)-alpha-D-Man-(1-&gt;2)-alpha-D-Man-(1-&gt;2)-alpha-D-Man-(1-&gt;3)-[alpha-D-Man-(1-&gt;2)-alpha-D-Man-(1-&gt;3)-[alpha-D-Man-(1-&gt;2)-alpha-D-Man-(1-&gt;6)]-alpha-D-Man-(1-&gt;6)]-beta-D-Man-(1-&gt;4)-beta-D-GlcNAc-(1-&gt;4)-beta-D-GlcNAc)-L-asparaginyl-[protein] + H2O = N(4)-(alpha-D-Glc-(1-&gt;3)-alpha-D-Man-(1-&gt;2)-alpha-D-Man-(1-&gt;2)-alpha-D-Man-(1-&gt;3)-[alpha-D-Man-(1-&gt;2)-alpha-D-Man-(1-&gt;3)-[alpha-D-Man-(1-&gt;2)-alpha-D-Man-(1-&gt;6)]-alpha-D-Man-(1-&gt;6)]-beta-D-Man-(1-&gt;4)-beta-D-GlcNAc-(1-&gt;4)-beta-D-GlcNAc)-L-asparaginyl-[protein] + beta-D-glucose. It functions in the pathway glycan metabolism; N-glycan metabolism. Functionally, cleaves sequentially the 2 innermost alpha-1,3-linked glucose residues from the Glc(2)Man(9)GlcNAc(2) oligosaccharide precursor of immature glycoproteins. May be required for defense response elicited by pathogen-associated molecular patterns (PAMPs). In Oryza sativa subsp. japonica (Rice), this protein is Probable glucan 1,3-alpha-glucosidase.